The primary structure comprises 525 residues: DNA damage-binding protein cmr1 (525 aa).

Residues 34-50 (TGVFTSNMPRGTSANQS) show a composition bias toward polar residues. Disordered regions lie at residues 34–103 (TGVF…ERAK), 214–240 (DASQEKPTSAVKNEDDEDDEDDDDPDP), and 282–301 (TSSVEKYAPESTSDDVPISG). Over residues 83-102 (EIAKRKADEEYDRRQEEERA) the composition is skewed to basic and acidic residues. The stretch at 182–223 (ITPERIYSMTFHPSEAKPVIFAGDKMGHLGILDASQEKPTSA) is one WD 1 repeat. Acidic residues predominate over residues 227-239 (EDDEDDEDDDDPD). 5 WD repeats span residues 247–287 (PHTR…SVEK), 339–379 (LSEK…HTDP), 384–425 (EHQS…SSWK), 448–491 (GRWV…LAQL), and 494–525 (DGITAVPAVAVFHRSKNWVAGGTASGKICLWM).

It belongs to the WD repeat DDB2/WDR76 family.

In terms of biological role, DNA-binding protein that binds to both single- and double-stranded DNA. Binds preferentially to UV-damaged DNA. May be involved in DNA-metabolic processes. The protein is DNA damage-binding protein cmr1 of Emericella nidulans (strain FGSC A4 / ATCC 38163 / CBS 112.46 / NRRL 194 / M139) (Aspergillus nidulans).